Consider the following 513-residue polypeptide: Maturase K (513 aa).

It belongs to the intron maturase 2 family. MatK subfamily.

The protein resides in the plastid. It localises to the chloroplast. In terms of biological role, usually encoded in the trnK tRNA gene intron. Probably assists in splicing its own and other chloroplast group II introns. The chain is Maturase K from Danthonia spicata (Poverty oatgrass).